The following is a 149-amino-acid chain: Large ribosomal subunit protein bL9 (149 aa).

This sequence belongs to the bacterial ribosomal protein bL9 family.

In terms of biological role, binds to the 23S rRNA. The sequence is that of Large ribosomal subunit protein bL9 from Salinibacter ruber (strain DSM 13855 / M31).